The sequence spans 598 residues: Elongation factor 4 (598 aa).

The tr-type G domain maps to Q3 to E185. Residues D15 to T20 and N132 to D135 each bind GTP.

This sequence belongs to the TRAFAC class translation factor GTPase superfamily. Classic translation factor GTPase family. LepA subfamily.

The protein resides in the cell inner membrane. It catalyses the reaction GTP + H2O = GDP + phosphate + H(+). Its function is as follows. Required for accurate and efficient protein synthesis under certain stress conditions. May act as a fidelity factor of the translation reaction, by catalyzing a one-codon backward translocation of tRNAs on improperly translocated ribosomes. Back-translocation proceeds from a post-translocation (POST) complex to a pre-translocation (PRE) complex, thus giving elongation factor G a second chance to translocate the tRNAs correctly. Binds to ribosomes in a GTP-dependent manner. The polypeptide is Elongation factor 4 (Nitrosomonas eutropha (strain DSM 101675 / C91 / Nm57)).